The primary structure comprises 258 residues: 14-3-3 protein 6 (258 aa).

Residues 238-258 are disordered; that stretch reads DMQDDGTDEIKEATPKPDDNE. Residues 245-258 are compositionally biased toward basic and acidic residues; the sequence is DEIKEATPKPDDNE.

Belongs to the 14-3-3 family. Homodimer.

The protein is 14-3-3 protein 6 (TFT6) of Solanum lycopersicum (Tomato).